The chain runs to 270 residues: 3-phenylpropionate-dihydrodiol/cinnamic acid-dihydrodiol dehydrogenase (270 aa).

10–34 (FITGGGSGLGLALVERFIEEGAQVA) contacts NAD(+). Ser143 lines the substrate pocket. The active-site Proton acceptor is the Tyr156.

This sequence belongs to the short-chain dehydrogenases/reductases (SDR) family.

It catalyses the reaction 3-(cis-5,6-dihydroxycyclohexa-1,3-dien-1-yl)propanoate + NAD(+) = 3-(2,3-dihydroxyphenyl)propanoate + NADH + H(+). It carries out the reaction (2E)-3-(cis-5,6-dihydroxycyclohexa-1,3-dien-1-yl)prop-2-enoate + NAD(+) = (2E)-3-(2,3-dihydroxyphenyl)prop-2-enoate + NADH + H(+). It functions in the pathway aromatic compound metabolism; 3-phenylpropanoate degradation. In terms of biological role, converts 3-phenylpropionate-dihydrodiol (PP-dihydrodiol) and cinnamic acid-dihydrodiol (CI-dihydrodiol) into 3-(2,3-dihydroxylphenyl)propanoic acid (DHPP) and 2,3-dihydroxicinnamic acid (DHCI), respectively. This Escherichia coli O7:K1 (strain IAI39 / ExPEC) protein is 3-phenylpropionate-dihydrodiol/cinnamic acid-dihydrodiol dehydrogenase.